The primary structure comprises 312 residues: Elongation factor Ts (312 aa).

Residues 80–83 (TDFV) form an involved in Mg(2+) ion dislocation from EF-Tu region.

It belongs to the EF-Ts family.

Its subcellular location is the cytoplasm. Its function is as follows. Associates with the EF-Tu.GDP complex and induces the exchange of GDP to GTP. It remains bound to the aminoacyl-tRNA.EF-Tu.GTP complex up to the GTP hydrolysis stage on the ribosome. This Paramagnetospirillum magneticum (strain ATCC 700264 / AMB-1) (Magnetospirillum magneticum) protein is Elongation factor Ts.